We begin with the raw amino-acid sequence, 500 residues long: ADP,ATP carrier protein 5 (500 aa).

A run of 11 helical transmembrane segments spans residues 26 to 46 (LGKFIPISALMFCILFNQNIL), 62 to 82 (IAGFAKVYCVTPVAALFVIIY), 94 to 114 (IFYYLSAFFISCFILFAFVIY), 149 to 169 (YIVYYSLAELWPNIFYVLLFW), 184 to 204 (FYTLFSLFGNSSLILVGFLMM), 224 to 244 (ITLVQVSTTIIAIVAIICCLL), 287 to 307 (LWLLLICSAAFGFAINLVEAV), 328 to 348 (LYILWTGVAIIVMTIIGNNVM), 357 to 377 (AVISPVIIMVTGVLFFGLIVF), 381 to 401 (ILSLFDGAILMSPLALAVSIG), and 469 to 489 (SISPILMVVFTFVCFAWIYAV).

It belongs to the ADP/ATP translocase tlc family.

It is found in the cell membrane. Functionally, provides the rickettsial cell with host ATP in exchange for rickettsial ADP. This is an obligate exchange system. This energy acquiring activity is an important component of rickettsial parasitism. In Rickettsia prowazekii (strain Madrid E), this protein is ADP,ATP carrier protein 5 (tlcE).